The primary structure comprises 577 residues: MLFSKLFAPTLKEPPKDAVLKSHKHLAQAGYIYQVGSGIYNFLPLAKKVLDKIENITHKRMQEHGAQNILMSFVVLASLWEKSGRLDKYGKELLVFKDRKDNDFVLSPTLEENITEIAANFIKSYKQLPVHLYQIHTKFRDEIRPRFGLVRAREFIMKDGYSFHEDAESLDKEFLNTQSAYKEILNDLGLDFRIVEADSGAIGGSKSKEFVVLTECGEDTIVVCKNCDYAANIEIAKRSKRPEPLNVPKAQLAKFPTPNTTSAQSVAEFFKTEPYFVLKALVRKVIHKDKETLACFFVRGDDNLEEVKALNALNIIGANALELREASQKDLDSAGLIAGFIGPYGLKKHVPYIIFDEDLKEGDCLITGANEKDFHAVGVDLKGFENLVYADIVQVKESDHCPNCQGALKYHKSLEVGHIFKLGQGYAKSLRASFLDKNGKEQFFEMGCYGIGISRLLSAILEQKSDDLGCVWTKNTAPFDVVIVVSNWKDEAQKKLAFEVYERLLQKGVDALLDDRDARFGAKMRDFELIGERLALIIGKQTLENKEFECIKRANLEKQTIKDIELEEKILEMLASE.

This sequence belongs to the class-II aminoacyl-tRNA synthetase family. ProS type 1 subfamily. Homodimer.

The protein resides in the cytoplasm. The catalysed reaction is tRNA(Pro) + L-proline + ATP = L-prolyl-tRNA(Pro) + AMP + diphosphate. Its function is as follows. Catalyzes the attachment of proline to tRNA(Pro) in a two-step reaction: proline is first activated by ATP to form Pro-AMP and then transferred to the acceptor end of tRNA(Pro). As ProRS can inadvertently accommodate and process non-cognate amino acids such as alanine and cysteine, to avoid such errors it has two additional distinct editing activities against alanine. One activity is designated as 'pretransfer' editing and involves the tRNA(Pro)-independent hydrolysis of activated Ala-AMP. The other activity is designated 'posttransfer' editing and involves deacylation of mischarged Ala-tRNA(Pro). The misacylated Cys-tRNA(Pro) is not edited by ProRS. The polypeptide is Proline--tRNA ligase (Helicobacter pylori (strain HPAG1)).